We begin with the raw amino-acid sequence, 423 residues long: Testican-2 (423 aa).

The signal sequence occupies residues 1-22 (MRAPGSGRLALPLLLLAVVALA). S72 is modified (phosphoserine). Cystine bridges form between C90/C101, C95/C111, C136/C166, C139/C159, and C148/C180. Residues 130-182 (GGKDSVCKPCHMAQLASVCGSDGHTYSSVCKLEQQACLSSKQLAVRCEGPCPC) form the Kazal-like domain. An N-linked (GlcNAc...) asparagine glycan is attached at N225. Residues 309-375 (KPPCLAELER…GTRMHGTPDC (67 aa)) form the Thyroglobulin type-1 domain. Intrachain disulfides connect C312–C336, C347–C354, and C356–C375. Residues S382 and S387 are each glycosylated (O-linked (Xyl...) (glycosaminoglycan) serine). Positions 387-423 (SGVGWEDEEEKETEEAGEEAEEEEGEAGEADDGGYIW) are disordered. Positions 391 to 423 (WEDEEEKETEEAGEEAEEEEGEAGEADDGGYIW) are enriched in acidic residues.

Post-translationally, O-glycosylated; contains chondroitin sulfate and heparan sulfate. Brain specific.

It is found in the secreted. Its subcellular location is the extracellular space. The protein resides in the extracellular matrix. Functionally, may participate in diverse steps of neurogenesis. Binds calcium. The polypeptide is Testican-2 (Spock2) (Mus musculus (Mouse)).